A 266-amino-acid polypeptide reads, in one-letter code: Killer cell lectin-like receptor 3 (266 aa).

Over 1–48 (MSEPEVTYSTVRLHKSSGLQKLVRHEETQGPREVGNRKCSAPWQLIVK) the chain is Cytoplasmic. A helical; Signal-anchor for type II membrane protein transmembrane segment spans residues 49–69 (ALGILCFLLLVTVAVLAVKIF). The Extracellular segment spans residues 70-266 (QYNQHKQEIN…CGKKLDKFPD (197 aa)). N-linked (GlcNAc...) asparagine glycans are attached at residues asparagine 79, asparagine 87, asparagine 104, and asparagine 113. The interval 147–151 (WFCYS) is involved in dimerization. Cysteine 149 and cysteine 154 form a disulfide bridge. A C-type lectin domain is found at 150–258 (YSTKCYYFIM…CNIPYYCICG (109 aa)). Asparagine 160 is a glycosylation site (N-linked (GlcNAc...) asparagine). Implicated in MHC class I binding stretches follow at residues 160-162 (NKT), 195-196 (IP), 207-208 (KK), 224-233 (MKIRKMNFKS), and 240-245 (SKARIE). Cystine bridges form between cysteine 167-cysteine 255, cysteine 171-cysteine 257, and cysteine 236-cysteine 249.

In terms of assembly, homodimer; disulfide-linked.

The protein localises to the membrane. Its function is as follows. Receptor on natural killer (NK) cells for class I MHC. The polypeptide is Killer cell lectin-like receptor 3 (Klra3) (Mus musculus (Mouse)).